The primary structure comprises 921 residues: MPPKPLRRAGAARSQRTSPEGGAGTASPPGGTRLEVGEAEFVALCDALKAPDSVREKAWMTYQSLAAADGASAYNKKKKETWGVCIFIVAIDLDEMTFTFTELLKSLSISVCTFFQFLKEVDVNMDTVSTKVDSTVSRLKKKYDVLLALYHKFERTCGLIYLEQPSSEISAELSSVLVLKNYWITFLLAKGKVLQMEDDLVISFQLLLCVLDYFIKLSPPAMLKEPYKSAVTALTVNGSTRTPRRGQNRNARASKQIDTDTKVIEILCKEHDCNLDEVKNVYFTSFIPFLNSLGVVASNGLPEVDVLSKQYDELYLKNKDIDARLFLDHDETLQPDVIACSQLERTPRKNNPDEEVNHVLPQTPVRAAMNTIQQLMMILNSATDKPSDTLIAYFNNCTVNPEDSILKRVESLGHIFKKKFAEAVGQGCAEIGSQRYQLGVRLYYRVMESMLKSEEERLSVHNFSKLLNDNIFHTSLLACALEIVMATYGRTASQSDGTSAETDLSFPWILNVFDLKAFDFYKVIESFIKVEPSLTRDMIKHLERCEHRIMESLAWQSDSPLFDLIKQSKEREGQTDQPEPTSTLNLPLQHNHTAADLYLSPVRSPKKKASGHPQSGTSNPDAQPSATSQTQKPQKSTSLSLFYKKVFRLAYLRLHTLFFRLLSEHPDLEPLIWTLFQHTLQNESELMRDRHLDQIMMCSMYGICKVKNVDLRFKTIVSAYKELPNTNQETFKRVLIREEQYDSIIVFYNLVFMQKLKTNILQYASNRPPTLSPIPHIPRSPYQFSNSPRRVPAGNNIYISPLKSPYKFSDGFHSPTKMTPRSRILVSIGETFGTSEKFQKINQMVCNSESHVKRSAEPSDAPKPLKRLRFDIEGQDEADGGKHLPQESKFQQKLAEMTSTRTRMQKQKLNDGNDTSANEEK.

Disordered regions lie at residues 1–31 and 603–634; these read MPPK…PPGG and RSPK…QKPQ. The segment covering 612-634 has biased composition (polar residues); that stretch reads HPQSGTSNPDAQPSATSQTQKPQ. Positions 853–869 match the Bipartite nuclear localization signal motif; that stretch reads KRSAEPSDAPKPLKRLR. The interval 873 to 921 is disordered; that stretch reads EGQDEADGGKHLPQESKFQQKLAEMTSTRTRMQKQKLNDGNDTSANEEK. Positions 910–921 are enriched in polar residues; that stretch reads NDGNDTSANEEK.

This sequence belongs to the retinoblastoma protein (RB) family. As to quaternary structure, interacts with and sequesters the E2F1 transcription factor, thereby inhibiting E2F1 transcription. Interacts with SUV39H1, KMT5B and KMT5C. In terms of assembly, (Microbial infection) Interacts with, and is inhibited by fowl adenovirus 1 protein GAM-1. Phosphorylated in G1, thereby releasing E2F1 which is then able to activate cell growth. Dephosphorylated at the late M phase. Phosphorylation of domain C promotes interaction between the C-terminal domain C and the Pocket domain, and thereby inhibits interactions with heterodimeric E2F/DP transcription factor complexes.

It localises to the nucleus. The protein localises to the cytoplasm. In terms of biological role, tumor suppressor that is a key regulator of the G1/S transition of the cell cycle. The hypophosphorylated form binds transcription regulators of the E2F family, preventing transcription of E2F-responsive genes. Both physically blocks E2Fs transactivating domain and recruits chromatin-modifying enzymes that actively repress transcription. Cyclin and CDK-dependent phosphorylation of RB1 induces its dissociation from E2Fs, thereby activating transcription of E2F responsive genes and triggering entry into S phase. RB1 also promotes the G0-G1 transition upon phosphorylation and activation by CDK3/cyclin-C. This chain is Retinoblastoma-associated protein (RB1), found in Gallus gallus (Chicken).